Consider the following 300-residue polypeptide: MSSAAVSKYVNDMWPGSPQEKASPSTSGSGRSSRLSSRSRSRSSSRSSRPHSRSSSRSSSRSHSRPRRSRRSRSRSRSRRRHQRKYRRYSRSYSRSRSRSRGHRYYRDSRYEQPRRYYQSPSPYRSRSRSRSRGRSHHRRSYYAITRGRRYYGFGRTVYPEDRPRWRERSRTRSRSRSRTPFRLSEKDRMELLEIAKANAAKALGTANFDLPASLRAKEASQGAVSCSGPKTEHSEKQTEVGTKNASEKSAAAQRNIAFSSNNSVAKPLEKTTKAAVEETSSGSPKIDKKKSPYGLWIPV.

Positions 1-142 are disordered; it reads MSSAAVSKYV…RGRSHHRRSY (142 aa). S17 carries the post-translational modification Phosphoserine. The span at 23–36 shows a compositional bias: low complexity; the sequence is SPSTSGSGRSSRLS. The segment covering 37 to 104 has biased composition (basic residues); sequence SRSRSRSSSR…RSRSRSRGHR (68 aa). A compositionally biased stretch (basic and acidic residues) spans 105 to 115; it reads YYRDSRYEQPR. Positions 116–125 are enriched in low complexity; the sequence is RYYQSPSPYR. Phosphoserine occurs at positions 120 and 122. Residues 126–141 show a composition bias toward basic residues; it reads SRSRSRSRGRSHHRRS. R147 carries the post-translational modification Omega-N-methylarginine. Residues 222–300 are disordered; sequence QGAVSCSGPK…KSPYGLWIPV (79 aa). The span at 268–277 shows a compositional bias: basic and acidic residues; it reads PLEKTTKAAV. Phosphoserine is present on S284.

It belongs to the RSRP family. In terms of processing, phosphorylated. Phosphorylation at Ser-120 and Ser-122 mediates the interaction with spliceosome proteins.

The protein localises to the nucleus. In terms of biological role, probably acts as a spliceosomal factor that contributes to spliceosome assembly and regulates the isoform switching of proteins such as PARP6. In Rattus norvegicus (Rat), this protein is Arginine/serine-rich protein 1 (Rsrp1).